We begin with the raw amino-acid sequence, 505 residues long: Deoxyguanosinetriphosphate triphosphohydrolase (505 aa).

One can recognise an HD domain in the interval 66–273 (RLTHSLEVQQ…MEAADDISYC (208 aa)).

The protein belongs to the dGTPase family. Type 1 subfamily. In terms of assembly, homotetramer. Mg(2+) is required as a cofactor.

The enzyme catalyses dGTP + H2O = 2'-deoxyguanosine + triphosphate + H(+). DGTPase preferentially hydrolyzes dGTP over the other canonical NTPs. This Yersinia enterocolitica serotype O:8 / biotype 1B (strain NCTC 13174 / 8081) protein is Deoxyguanosinetriphosphate triphosphohydrolase.